A 134-amino-acid polypeptide reads, in one-letter code: Small ribosomal subunit protein uS11 (134 aa).

The protein belongs to the universal ribosomal protein uS11 family. Part of the 30S ribosomal subunit. Interacts with proteins S7 and S18. Binds to IF-3.

Located on the platform of the 30S subunit, it bridges several disparate RNA helices of the 16S rRNA. Forms part of the Shine-Dalgarno cleft in the 70S ribosome. The chain is Small ribosomal subunit protein uS11 from Corynebacterium glutamicum (strain R).